The primary structure comprises 342 residues: RNA 3'-terminal phosphate cyclase (342 aa).

ATP is bound by residues Gln-103 and 283-287 (YLADQ). His-308 acts as the Tele-AMP-histidine intermediate in catalysis.

Belongs to the RNA 3'-terminal cyclase family. Type 1 subfamily.

It is found in the cytoplasm. The enzyme catalyses a 3'-end 3'-phospho-ribonucleotide-RNA + ATP = a 3'-end 2',3'-cyclophospho-ribonucleotide-RNA + AMP + diphosphate. Functionally, catalyzes the conversion of 3'-phosphate to a 2',3'-cyclic phosphodiester at the end of RNA. The mechanism of action of the enzyme occurs in 3 steps: (A) adenylation of the enzyme by ATP; (B) transfer of adenylate to an RNA-N3'P to produce RNA-N3'PP5'A; (C) and attack of the adjacent 2'-hydroxyl on the 3'-phosphorus in the diester linkage to produce the cyclic end product. The biological role of this enzyme is unknown but it is likely to function in some aspects of cellular RNA processing. The protein is RNA 3'-terminal phosphate cyclase (rtcA) of Escherichia coli O157:H7.